Reading from the N-terminus, the 171-residue chain is MLRLLEEKIATPLGPLWVVCDEQFRLRAIEWEQYRDRMEQLLNIHYRHEGYERVSATNPGGLSDKLADYFAGNLAVIDTLETATGGTPFQREVWQALRAIPCGQVMHYGQLAAQLGRPGAARAVGAANGANPISIVVPCHRVIGRNGTLTGYAGGVQRKEWLLRHEGYLLL.

Cys139 acts as the Nucleophile; methyl group acceptor in catalysis.

This sequence belongs to the MGMT family.

The protein localises to the cytoplasm. The enzyme catalyses a 6-O-methyl-2'-deoxyguanosine in DNA + L-cysteinyl-[protein] = S-methyl-L-cysteinyl-[protein] + a 2'-deoxyguanosine in DNA. The catalysed reaction is a 4-O-methyl-thymidine in DNA + L-cysteinyl-[protein] = a thymidine in DNA + S-methyl-L-cysteinyl-[protein]. Involved in the cellular defense against the biological effects of O6-methylguanine (O6-MeG) and O4-methylthymine (O4-MeT) in DNA. Repairs the methylated nucleobase in DNA by stoichiometrically transferring the methyl group to a cysteine residue in the enzyme. This is a suicide reaction: the enzyme is irreversibly inactivated. The sequence is that of Methylated-DNA--protein-cysteine methyltransferase from Salmonella typhi.